The sequence spans 105 residues: Large ribosomal subunit protein uL24 (105 aa).

It belongs to the universal ribosomal protein uL24 family. As to quaternary structure, part of the 50S ribosomal subunit.

One of two assembly initiator proteins, it binds directly to the 5'-end of the 23S rRNA, where it nucleates assembly of the 50S subunit. In terms of biological role, one of the proteins that surrounds the polypeptide exit tunnel on the outside of the subunit. In Xylella fastidiosa (strain 9a5c), this protein is Large ribosomal subunit protein uL24.